A 163-amino-acid polypeptide reads, in one-letter code: Phosphopantetheine adenylyltransferase (163 aa).

T11 lines the substrate pocket. Residues 11 to 12 (TF) and H19 each bind ATP. Substrate is bound by residues K43, L75, and R89. ATP is bound by residues 90-92 (GLR), E100, and 125-131 (YMFISAT).

The protein belongs to the bacterial CoaD family. As to quaternary structure, homohexamer. It depends on Mg(2+) as a cofactor.

It localises to the cytoplasm. The enzyme catalyses (R)-4'-phosphopantetheine + ATP + H(+) = 3'-dephospho-CoA + diphosphate. Its pathway is cofactor biosynthesis; coenzyme A biosynthesis; CoA from (R)-pantothenate: step 4/5. Functionally, reversibly transfers an adenylyl group from ATP to 4'-phosphopantetheine, yielding dephospho-CoA (dPCoA) and pyrophosphate. The protein is Phosphopantetheine adenylyltransferase of Aromatoleum aromaticum (strain DSM 19018 / LMG 30748 / EbN1) (Azoarcus sp. (strain EbN1)).